Consider the following 170-residue polypeptide: Shikimate kinase (170 aa).

11-16 is an ATP binding site; sequence LSGKST. Residue serine 15 coordinates Mg(2+). Aspartate 33, arginine 57, and glycine 79 together coordinate substrate. Residue arginine 119 participates in ATP binding. A substrate-binding site is contributed by arginine 137.

The protein belongs to the shikimate kinase family. Monomer. Mg(2+) is required as a cofactor.

It is found in the cytoplasm. It catalyses the reaction shikimate + ATP = 3-phosphoshikimate + ADP + H(+). Its pathway is metabolic intermediate biosynthesis; chorismate biosynthesis; chorismate from D-erythrose 4-phosphate and phosphoenolpyruvate: step 5/7. Functionally, catalyzes the specific phosphorylation of the 3-hydroxyl group of shikimic acid using ATP as a cosubstrate. The chain is Shikimate kinase from Clostridium botulinum (strain Langeland / NCTC 10281 / Type F).